Here is a 650-residue protein sequence, read N- to C-terminus: Threonine--tRNA ligase (650 aa).

One can recognise a TGS domain in the interval 3 to 65 (DLVKVTLPDG…ERDARLEIVT (63 aa)). The segment at 248–548 (DHRRLGPQLG…LVEHYAGAFP (301 aa)) is catalytic. Residues cysteine 349, histidine 400, and histidine 525 each coordinate Zn(2+).

It belongs to the class-II aminoacyl-tRNA synthetase family. Homodimer. Zn(2+) is required as a cofactor.

The protein resides in the cytoplasm. The catalysed reaction is tRNA(Thr) + L-threonine + ATP = L-threonyl-tRNA(Thr) + AMP + diphosphate + H(+). Functionally, catalyzes the attachment of threonine to tRNA(Thr) in a two-step reaction: L-threonine is first activated by ATP to form Thr-AMP and then transferred to the acceptor end of tRNA(Thr). Also edits incorrectly charged L-seryl-tRNA(Thr). The polypeptide is Threonine--tRNA ligase (Anaeromyxobacter dehalogenans (strain 2CP-1 / ATCC BAA-258)).